A 109-amino-acid chain; its full sequence is Aquaporin-2 (109 aa).

Topologically, residues 1–6 are cytoplasmic; that stretch reads SIAFSR. The chain crosses the membrane as a helical span at residues 7–27; that stretch reads AVFAEFLATLLFVFFGLGSAL. Residues 28 to 35 lie on the Extracellular side of the membrane; sequence NWPSALPS. The helical transmembrane segment at 36–54 threads the bilayer; it reads TLQIAMAFGLGIGTLVQAL. The Cytoplasmic portion of the chain corresponds to 55–59; the sequence is GHVSG. An intramembrane region (discontinuously helical) is located at residues 60-69; that stretch reads AHINPAVTVA. The NPA 1 signature appears at 63 to 65; the sequence is NPA. Residues 70–80 are Cytoplasmic-facing; it reads CLVGCHVSFLR. A helical transmembrane segment spans residues 81–102; it reads AAFYVAAQLLGAVAGAALLHEI. The Extracellular segment spans residues 103–109; the sequence is TPAEVRG.

It belongs to the MIP/aquaporin (TC 1.A.8) family. In terms of assembly, homotetramer. Serine phosphorylation is necessary and sufficient for expression at the apical membrane. Endocytosis is not phosphorylation-dependent. In terms of processing, N-glycosylated.

It localises to the apical cell membrane. It is found in the basolateral cell membrane. The protein resides in the cell membrane. Its subcellular location is the cytoplasmic vesicle membrane. The protein localises to the golgi apparatus. It localises to the trans-Golgi network membrane. The catalysed reaction is H2O(in) = H2O(out). It catalyses the reaction glycerol(in) = glycerol(out). In terms of biological role, forms a water-specific channel that provides the plasma membranes of renal collecting duct with high permeability to water, thereby permitting water to move in the direction of an osmotic gradient. Plays an essential role in renal water homeostasis. Could also be permeable to glycerol. The sequence is that of Aquaporin-2 from Oryctolagus cuniculus (Rabbit).